A 216-amino-acid polypeptide reads, in one-letter code: Thymidylate kinase (216 aa).

An ATP-binding site is contributed by 10–17 (GVDGSGKT).

The protein belongs to the thymidylate kinase family.

The enzyme catalyses dTMP + ATP = dTDP + ADP. Functionally, phosphorylation of dTMP to form dTDP in both de novo and salvage pathways of dTTP synthesis. This is Thymidylate kinase from Pelotomaculum thermopropionicum (strain DSM 13744 / JCM 10971 / SI).